Consider the following 78-residue polypeptide: Small ribosomal subunit protein bS18 (78 aa).

Belongs to the bacterial ribosomal protein bS18 family. As to quaternary structure, part of the 30S ribosomal subunit. Forms a tight heterodimer with protein bS6.

Its function is as follows. Binds as a heterodimer with protein bS6 to the central domain of the 16S rRNA, where it helps stabilize the platform of the 30S subunit. The sequence is that of Small ribosomal subunit protein bS18 from Rhodospirillum rubrum (strain ATCC 11170 / ATH 1.1.1 / DSM 467 / LMG 4362 / NCIMB 8255 / S1).